The sequence spans 338 residues: tRNA N6-adenosine threonylcarbamoyltransferase (338 aa).

Residues histidine 109 and histidine 113 each coordinate Fe cation. Substrate is bound by residues 132–136 (AISGA), aspartate 165, glycine 178, and asparagine 277. Position 302 (aspartate 302) interacts with Fe cation.

This sequence belongs to the KAE1 / TsaD family. The cofactor is Fe(2+).

It is found in the cytoplasm. It carries out the reaction L-threonylcarbamoyladenylate + adenosine(37) in tRNA = N(6)-L-threonylcarbamoyladenosine(37) in tRNA + AMP + H(+). Functionally, required for the formation of a threonylcarbamoyl group on adenosine at position 37 (t(6)A37) in tRNAs that read codons beginning with adenine. Is involved in the transfer of the threonylcarbamoyl moiety of threonylcarbamoyl-AMP (TC-AMP) to the N6 group of A37, together with TsaE and TsaB. TsaD likely plays a direct catalytic role in this reaction. This is tRNA N6-adenosine threonylcarbamoyltransferase from Chlamydia trachomatis serovar L2b (strain UCH-1/proctitis).